Here is a 183-residue protein sequence, read N- to C-terminus: ATP synthase subunit b, chloroplastic (183 aa).

Residues Leu27 to Leu49 traverse the membrane as a helical segment.

The protein belongs to the ATPase B chain family. F-type ATPases have 2 components, F(1) - the catalytic core - and F(0) - the membrane proton channel. F(1) has five subunits: alpha(3), beta(3), gamma(1), delta(1), epsilon(1). F(0) has four main subunits: a(1), b(1), b'(1) and c(10-14). The alpha and beta chains form an alternating ring which encloses part of the gamma chain. F(1) is attached to F(0) by a central stalk formed by the gamma and epsilon chains, while a peripheral stalk is formed by the delta, b and b' chains.

The protein resides in the plastid. It localises to the chloroplast thylakoid membrane. In terms of biological role, f(1)F(0) ATP synthase produces ATP from ADP in the presence of a proton or sodium gradient. F-type ATPases consist of two structural domains, F(1) containing the extramembraneous catalytic core and F(0) containing the membrane proton channel, linked together by a central stalk and a peripheral stalk. During catalysis, ATP synthesis in the catalytic domain of F(1) is coupled via a rotary mechanism of the central stalk subunits to proton translocation. Functionally, component of the F(0) channel, it forms part of the peripheral stalk, linking F(1) to F(0). This chain is ATP synthase subunit b, chloroplastic, found in Lolium perenne (Perennial ryegrass).